Here is a 135-residue protein sequence, read N- to C-terminus: Large ribosomal subunit protein bL21 (135 aa).

The disordered stretch occupies residues 85 to 135 (YRVKRGHRQQYTQIEIESLNANGPASSDDEEAAETSDAEPDEDPEAEPAEA). Residues 93 to 107 (QQYTQIEIESLNANG) are compositionally biased toward polar residues. A compositionally biased stretch (acidic residues) spans 111–135 (SDDEEAAETSDAEPDEDPEAEPAEA).

This sequence belongs to the bacterial ribosomal protein bL21 family. Part of the 50S ribosomal subunit. Contacts protein L20.

This protein binds to 23S rRNA in the presence of protein L20. The sequence is that of Large ribosomal subunit protein bL21 from Salinibacter ruber (strain DSM 13855 / M31).